Consider the following 378-residue polypeptide: MNNTEFYDRLGVSKNASADEIKKAYRKLSKKYHPDINKEPGAEDKYKEVQEAYETLSDDQKRAAYDQYGAAGANGGFGGAGGFGGFNGAGGFGGFEDIFSSFFGGGGSSRNPNAPRQGDDLQYRVNLTFEEAIFGTEKEVKYHREAGCRTCNGSGAKPGTSPVTCGRCHGAGVINVDTQTPLGMMRRQVTCDVCHGRGKEIKYPCTTCHGTGHEKQAHSVHVKIPAGVETGQQIRLAGQGEAGFNGGPYGDLYVVVSVEASDKFEREGTTIFYNLNLNFVQAALGDTVDIPTVHGDVELVIPEGTQTGKKFRLRSKGAPSLRGGAVGDQYVTVNVVTPTGLNDRQKVALKEFAAAGDLKVNPKKKGFFDHIKDAFDGE.

The 65-residue stretch at 5–69 folds into the J domain; that stretch reads EFYDRLGVSK…QKRAAYDQYG (65 aa). The CR-type zinc-finger motif lies at 135–217; the sequence is GTEKEVKYHR…CHGTGHEKQA (83 aa). Residues C148, C151, C165, C168, C191, C194, C205, and C208 each coordinate Zn(2+). 4 CXXCXGXG motif repeats span residues 148-155, 165-172, 191-198, and 205-212; these read CRTCNGSG, CGRCHGAG, CDVCHGRG, and CTTCHGTG.

It belongs to the DnaJ family. In terms of assembly, homodimer. The cofactor is Zn(2+).

It is found in the cytoplasm. Its function is as follows. Participates actively in the response to hyperosmotic and heat shock by preventing the aggregation of stress-denatured proteins and by disaggregating proteins, also in an autonomous, DnaK-independent fashion. Unfolded proteins bind initially to DnaJ; upon interaction with the DnaJ-bound protein, DnaK hydrolyzes its bound ATP, resulting in the formation of a stable complex. GrpE releases ADP from DnaK; ATP binding to DnaK triggers the release of the substrate protein, thus completing the reaction cycle. Several rounds of ATP-dependent interactions between DnaJ, DnaK and GrpE are required for fully efficient folding. Also involved, together with DnaK and GrpE, in the DNA replication of plasmids through activation of initiation proteins. In Streptococcus pneumoniae serotype 4 (strain ATCC BAA-334 / TIGR4), this protein is Chaperone protein DnaJ.